The following is a 268-amino-acid chain: Phosphatidylglycerol--prolipoprotein diacylglyceryl transferase (268 aa).

A run of 7 helical transmembrane segments spans residues 10 to 30 (VALAIGPLKIHWYGLMYLIGI), 56 to 76 (LVFWLSMGVIVGGRLGYVLFY), 92 to 112 (WKGGMSFHGGFIGVMLAALWF), 120 to 140 (FFELMDFVAPLVPIGLGAGRI), 174 to 194 (PSQLYQFALEGVALFVILWLF), 202 to 222 (MAVSGMFSLCYGIFRFAVEFV), and 236 to 256 (WLTQGQLLCIPMIVGGLVLIW). Residue R139 participates in a 1,2-diacyl-sn-glycero-3-phospho-(1'-sn-glycerol) binding.

It belongs to the Lgt family.

Its subcellular location is the cell inner membrane. It carries out the reaction L-cysteinyl-[prolipoprotein] + a 1,2-diacyl-sn-glycero-3-phospho-(1'-sn-glycerol) = an S-1,2-diacyl-sn-glyceryl-L-cysteinyl-[prolipoprotein] + sn-glycerol 1-phosphate + H(+). It participates in protein modification; lipoprotein biosynthesis (diacylglyceryl transfer). Catalyzes the transfer of the diacylglyceryl group from phosphatidylglycerol to the sulfhydryl group of the N-terminal cysteine of a prolipoprotein, the first step in the formation of mature lipoproteins. In Pseudomonas putida (strain ATCC 47054 / DSM 6125 / CFBP 8728 / NCIMB 11950 / KT2440), this protein is Phosphatidylglycerol--prolipoprotein diacylglyceryl transferase.